We begin with the raw amino-acid sequence, 477 residues long: Protein nucleotidyltransferase YdiU (477 aa).

Positions 89, 91, 92, 112, 124, 125, 178, and 185 each coordinate ATP. The Proton acceptor role is filled by Asp-257. Mg(2+) is bound by residues Asn-258 and Asp-267. Asp-267 provides a ligand contact to ATP.

It belongs to the SELO family. The cofactor is Mg(2+). Requires Mn(2+) as cofactor.

The enzyme catalyses L-seryl-[protein] + ATP = 3-O-(5'-adenylyl)-L-seryl-[protein] + diphosphate. It catalyses the reaction L-threonyl-[protein] + ATP = 3-O-(5'-adenylyl)-L-threonyl-[protein] + diphosphate. The catalysed reaction is L-tyrosyl-[protein] + ATP = O-(5'-adenylyl)-L-tyrosyl-[protein] + diphosphate. It carries out the reaction L-histidyl-[protein] + UTP = N(tele)-(5'-uridylyl)-L-histidyl-[protein] + diphosphate. The enzyme catalyses L-seryl-[protein] + UTP = O-(5'-uridylyl)-L-seryl-[protein] + diphosphate. It catalyses the reaction L-tyrosyl-[protein] + UTP = O-(5'-uridylyl)-L-tyrosyl-[protein] + diphosphate. Functionally, nucleotidyltransferase involved in the post-translational modification of proteins. It can catalyze the addition of adenosine monophosphate (AMP) or uridine monophosphate (UMP) to a protein, resulting in modifications known as AMPylation and UMPylation. This chain is Protein nucleotidyltransferase YdiU, found in Synechocystis sp. (strain ATCC 27184 / PCC 6803 / Kazusa).